A 229-amino-acid polypeptide reads, in one-letter code: Enolase-phosphatase E1 (229 aa).

Belongs to the HAD-like hydrolase superfamily. MasA/MtnC family. As to quaternary structure, monomer. Mg(2+) is required as a cofactor.

The enzyme catalyses 5-methylsulfanyl-2,3-dioxopentyl phosphate + H2O = 1,2-dihydroxy-5-(methylsulfanyl)pent-1-en-3-one + phosphate. It functions in the pathway amino-acid biosynthesis; L-methionine biosynthesis via salvage pathway; L-methionine from S-methyl-5-thio-alpha-D-ribose 1-phosphate: step 3/6. It participates in amino-acid biosynthesis; L-methionine biosynthesis via salvage pathway; L-methionine from S-methyl-5-thio-alpha-D-ribose 1-phosphate: step 4/6. Its function is as follows. Bifunctional enzyme that catalyzes the enolization of 2,3-diketo-5-methylthiopentyl-1-phosphate (DK-MTP-1-P) into the intermediate 2-hydroxy-3-keto-5-methylthiopentenyl-1-phosphate (HK-MTPenyl-1-P), which is then dephosphorylated to form the acireductone 1,2-dihydroxy-3-keto-5-methylthiopentene (DHK-MTPene). This is Enolase-phosphatase E1 from Erwinia tasmaniensis (strain DSM 17950 / CFBP 7177 / CIP 109463 / NCPPB 4357 / Et1/99).